Consider the following 285-residue polypeptide: UPF0354 protein SH1179 (285 aa).

Belongs to the UPF0354 family.

The chain is UPF0354 protein SH1179 from Staphylococcus haemolyticus (strain JCSC1435).